A 207-amino-acid polypeptide reads, in one-letter code: Peptidyl-prolyl cis-trans isomerase FKBP16-1, chloroplastic (207 aa).

Residues 104-207 form the PPIase FKBP-type domain; that stretch reads GDLVELNYVC…VFEIQLLKVL (104 aa).

This sequence belongs to the FKBP-type PPIase family.

It localises to the plastid. Its subcellular location is the chloroplast thylakoid lumen. It catalyses the reaction [protein]-peptidylproline (omega=180) = [protein]-peptidylproline (omega=0). Functionally, PPIases accelerate the folding of proteins. It catalyzes the cis-trans isomerization of proline imidic peptide bonds in oligopeptides. The polypeptide is Peptidyl-prolyl cis-trans isomerase FKBP16-1, chloroplastic (FKBP16-1) (Arabidopsis thaliana (Mouse-ear cress)).